Consider the following 595-residue polypeptide: Chaperone protein HscA homolog (595 aa).

Belongs to the heat shock protein 70 family.

Its function is as follows. Chaperone involved in the maturation of iron-sulfur cluster-containing proteins. Has a low intrinsic ATPase activity which is markedly stimulated by HscB. The chain is Chaperone protein HscA homolog from Rickettsia rickettsii (strain Iowa).